The sequence spans 223 residues: Phosphoribosylformylglycinamidine synthase subunit PurQ (223 aa).

One can recognise a Glutamine amidotransferase type-1 domain in the interval 4-223 (KIGVITFPGT…FLSAVGTIAA (220 aa)). Cys-87 acts as the Nucleophile in catalysis. Active-site residues include His-195 and Glu-197.

Part of the FGAM synthase complex composed of 1 PurL, 1 PurQ and 2 PurS subunits.

Its subcellular location is the cytoplasm. The enzyme catalyses N(2)-formyl-N(1)-(5-phospho-beta-D-ribosyl)glycinamide + L-glutamine + ATP + H2O = 2-formamido-N(1)-(5-O-phospho-beta-D-ribosyl)acetamidine + L-glutamate + ADP + phosphate + H(+). The catalysed reaction is L-glutamine + H2O = L-glutamate + NH4(+). It functions in the pathway purine metabolism; IMP biosynthesis via de novo pathway; 5-amino-1-(5-phospho-D-ribosyl)imidazole from N(2)-formyl-N(1)-(5-phospho-D-ribosyl)glycinamide: step 1/2. Its function is as follows. Part of the phosphoribosylformylglycinamidine synthase complex involved in the purines biosynthetic pathway. Catalyzes the ATP-dependent conversion of formylglycinamide ribonucleotide (FGAR) and glutamine to yield formylglycinamidine ribonucleotide (FGAM) and glutamate. The FGAM synthase complex is composed of three subunits. PurQ produces an ammonia molecule by converting glutamine to glutamate. PurL transfers the ammonia molecule to FGAR to form FGAM in an ATP-dependent manner. PurS interacts with PurQ and PurL and is thought to assist in the transfer of the ammonia molecule from PurQ to PurL. This is Phosphoribosylformylglycinamidine synthase subunit PurQ from Corynebacterium glutamicum (strain ATCC 13032 / DSM 20300 / JCM 1318 / BCRC 11384 / CCUG 27702 / LMG 3730 / NBRC 12168 / NCIMB 10025 / NRRL B-2784 / 534).